The sequence spans 163 residues: Disulfide bond formation protein B (163 aa).

Topologically, residues 1–9 (MRLASPRSL) are cytoplasmic. The helical transmembrane segment at 10-26 (FVIAFLGSALLIAIALY) threads the bilayer. Topologically, residues 27–44 (MEHVMGLAPCPLCIVQRI) are periplasmic. An intrachain disulfide couples C36 to C39. A helical transmembrane segment spans residues 45–61 (CVIGFGLVCLVAAIHGP). At 62–67 (AKVGRR) the chain is on the cytoplasmic side. The chain crosses the membrane as a helical span at residues 68–85 (VYAAIAALFVAAGAATAI). The Periplasmic portion of the chain corresponds to 86 to 142 (RQIWLQSVPADQLPSCLPSLEYMMEALPFQEIARLVLHGTAECAEVSWTMLGMSIPE). The cysteines at positions 101 and 128 are disulfide-linked. Residues 143 to 161 (WSLLGFIGMAIVCLWQLLR) form a helical membrane-spanning segment. Residues 162-163 (RD) lie on the Cytoplasmic side of the membrane.

It belongs to the DsbB family.

The protein localises to the cell inner membrane. In terms of biological role, required for disulfide bond formation in some periplasmic proteins. Acts by oxidizing the DsbA protein. The polypeptide is Disulfide bond formation protein B (Stutzerimonas stutzeri (strain A1501) (Pseudomonas stutzeri)).